The chain runs to 34 residues: Trypsin inhibitor 2 (34 aa).

Residues 1–34 (SGSDGGVCPKILKKCRRDSDCPGACICRGNGYCG) constitute a cross-link (cyclopeptide (Ser-Gly)). Residues 4 to 5 (DG) constitute a cross-link ((2-aminosuccinimidyl)acetic acid (Asp-Gly); alternate). Residues 4-5 (DG) constitute a cross-link (isoaspartyl glycine isopeptide (Asp-Gly); alternate). 3 disulfides stabilise this stretch: Cys-8/Cys-25, Cys-15/Cys-27, and Cys-21/Cys-33.

In terms of processing, a cyclic succinimide probably forms by loss of water between Asp-4 and Gly-5, that can then rehydrate to either the original peptide bond or to a beta-aspartyl isopeptide bond. Three isoforms of MCoTI-II are detected, two with the parent molecular weight, corresponding to the unmodified and proposed isopeptide forms, and one with a molecular weight 18 Da lower, corresponding to a succinimide cross-linked form. Post-translationally, this is a cyclic peptide.

It localises to the secreted. Inhibits trypsin; probably participates in a plant defense mechanism. This Momordica cochinchinensis (Spiny bitter cucumber) protein is Trypsin inhibitor 2.